The primary structure comprises 521 residues: Glutamate--cysteine ligase (521 aa).

This sequence belongs to the glutamate--cysteine ligase type 1 family. Type 1 subfamily.

It carries out the reaction L-cysteine + L-glutamate + ATP = gamma-L-glutamyl-L-cysteine + ADP + phosphate + H(+). Its pathway is sulfur metabolism; glutathione biosynthesis; glutathione from L-cysteine and L-glutamate: step 1/2. This chain is Glutamate--cysteine ligase, found in Aliivibrio salmonicida (strain LFI1238) (Vibrio salmonicida (strain LFI1238)).